A 212-amino-acid chain; its full sequence is Large ribosomal subunit protein uL3 (212 aa).

The tract at residues 133 to 156 (SMTHGSKNHRLPGSTGAGTTPGRV) is disordered.

Belongs to the universal ribosomal protein uL3 family. In terms of assembly, part of the 50S ribosomal subunit. Forms a cluster with proteins L14 and L19.

One of the primary rRNA binding proteins, it binds directly near the 3'-end of the 23S rRNA, where it nucleates assembly of the 50S subunit. This is Large ribosomal subunit protein uL3 from Crocosphaera subtropica (strain ATCC 51142 / BH68) (Cyanothece sp. (strain ATCC 51142)).